The sequence spans 28 residues: MATQGFSCLLLSVSEIDLSMKRQYKQIR.

Belongs to the humanin family. Highly expressed in testis. Also expressed in kidney, heart, skeletal muscles and brain.

The protein resides in the secreted. The protein localises to the cytoplasm. In terms of biological role, plays a role as a neuroprotective and antiapoptotic factor. The sequence is that of Humanin-like 4 from Homo sapiens (Human).